Here is an 892-residue protein sequence, read N- to C-terminus: Chromodomain-helicase-DNA-binding protein 3 (892 aa).

Residues 1 to 20 are compositionally biased toward basic and acidic residues; it reads MSSKRGADPDWKTPGKASKD. Residues 1-29 form a disordered region; it reads MSSKRGADPDWKTPGKASKDKRPKTNAKK. Residues 35–82 form a PHD-type zinc finger; it reads EEYCKVCSDGGDLLCCDSCPSVYHRTCLSPPLKSIPKGDWICPRCIPL. 2 Chromo domains span residues 84 to 156 and 179 to 240; these read GKAE…PSLE and LLVQ…GRQR. The region spanning 279–458 is the Helicase ATP-binding domain; sequence RYSWGQGIPT…FHLLNFLSSG (180 aa). An ATP-binding site is contributed by 292–299; the sequence is DEMGLGKT. A DEAH box motif is present at residues 409-412; sequence DEAH. Residues 590-739 form the Helicase C-terminal domain; it reads LLSKMLKQLK…LTHLVVRPGM (150 aa). Positions 839–892 are disordered; sequence SQPKLPKKQKKQSQQSQVDVESIMGKGKRIRKEIDYSNQYPSPNRATPSSIVLM. Polar residues predominate over residues 874–892; that stretch reads YSNQYPSPNRATPSSIVLM.

Belongs to the SNF2/RAD54 helicase family. Monomer.

It is found in the nucleus. The protein resides in the chromosome. The catalysed reaction is ATP + H2O = ADP + phosphate + H(+). Its activity is regulated as follows. ATPase activity is stimulated by binding to DNA or nucleosomes, but is strongly activated by nucleosomes. Its function is as follows. ATP-dependent chromatin-remodeling factor which acts in nucleosome-remodeling by catalyzing ATP-dependent nucleosome mobilization. Likely to be involved in the regulation of transcription. This chain is Chromodomain-helicase-DNA-binding protein 3, found in Drosophila melanogaster (Fruit fly).